Reading from the N-terminus, the 305-residue chain is UDP-3-O-acyl-N-acetylglucosamine deacetylase (305 aa).

3 residues coordinate Zn(2+): His78, His235, and Asp239. His262 serves as the catalytic Proton donor.

The protein belongs to the LpxC family. The cofactor is Zn(2+).

It catalyses the reaction a UDP-3-O-[(3R)-3-hydroxyacyl]-N-acetyl-alpha-D-glucosamine + H2O = a UDP-3-O-[(3R)-3-hydroxyacyl]-alpha-D-glucosamine + acetate. Its pathway is glycolipid biosynthesis; lipid IV(A) biosynthesis; lipid IV(A) from (3R)-3-hydroxytetradecanoyl-[acyl-carrier-protein] and UDP-N-acetyl-alpha-D-glucosamine: step 2/6. In terms of biological role, catalyzes the hydrolysis of UDP-3-O-myristoyl-N-acetylglucosamine to form UDP-3-O-myristoylglucosamine and acetate, the committed step in lipid A biosynthesis. In Citrifermentans bemidjiense (strain ATCC BAA-1014 / DSM 16622 / JCM 12645 / Bem) (Geobacter bemidjiensis), this protein is UDP-3-O-acyl-N-acetylglucosamine deacetylase.